Reading from the N-terminus, the 120-residue chain is MIDLDTLKYENGLILAVVQDQKSREVLMCAYMNREALEKTVKTGIAHFWSRSRKQLWKKGETSGHLQKVKEIRIDCDMDSVLLLVEQVGGACHMGYRSCFYRNLKGEVVGEKVFEPKDVY.

Asp75 contributes to the Mg(2+) binding site. A Zn(2+)-binding site is contributed by Cys76. Mg(2+) contacts are provided by Asp77 and Asp79. Positions 92 and 99 each coordinate Zn(2+).

Belongs to the PRA-CH family. In terms of assembly, homodimer. It depends on Mg(2+) as a cofactor. The cofactor is Zn(2+).

It is found in the cytoplasm. The enzyme catalyses 1-(5-phospho-beta-D-ribosyl)-5'-AMP + H2O = 1-(5-phospho-beta-D-ribosyl)-5-[(5-phospho-beta-D-ribosylamino)methylideneamino]imidazole-4-carboxamide. Its pathway is amino-acid biosynthesis; L-histidine biosynthesis; L-histidine from 5-phospho-alpha-D-ribose 1-diphosphate: step 3/9. Functionally, catalyzes the hydrolysis of the adenine ring of phosphoribosyl-AMP. In Methanosarcina acetivorans (strain ATCC 35395 / DSM 2834 / JCM 12185 / C2A), this protein is Phosphoribosyl-AMP cyclohydrolase.